Consider the following 219-residue polypeptide: Poxin (219 aa).

The active-site Proton donor is the His-17. The active-site Shared with catalytic histidine of dimeric partner is the Tyr-138. Lys-142 serves as the catalytic Proton acceptor; shared with catalytic histidine of dimeric partner.

Belongs to the poxin family. In terms of assembly, homodimer.

It carries out the reaction 2',3'-cGAMP + H2O = Gp(2'-5')Ap(3') + H(+). In terms of biological role, nuclease that is responsible for viral evasion of host cGAS-STING innate immunity. Cleaves 2',3'-cGAMP which is produced by host cGAS following recognition of cytosolic DNA and blocks the subsequent 2',3'-cGAMP-mediated activation of TMEM173/STING, which normally spreads to adjacent cells and activates the interferon and NF-kappa-B immune responses. This chain is Poxin (OPG188), found in Homo sapiens (Human).